The primary structure comprises 245 residues: tRNA pseudouridine synthase A (245 aa).

Asp-52 acts as the Nucleophile in catalysis. Residue Tyr-111 coordinates substrate.

The protein belongs to the tRNA pseudouridine synthase TruA family. As to quaternary structure, homodimer.

It carries out the reaction uridine(38/39/40) in tRNA = pseudouridine(38/39/40) in tRNA. Functionally, formation of pseudouridine at positions 38, 39 and 40 in the anticodon stem and loop of transfer RNAs. This Rhodopseudomonas palustris (strain BisB18) protein is tRNA pseudouridine synthase A.